Reading from the N-terminus, the 216-residue chain is Thymidine kinase (216 aa).

Residues 9–16 (GPMDSGKS) and 86–89 (DEAQ) contribute to the ATP site. The Proton acceptor role is filled by Glu87.

The protein belongs to the thymidine kinase family. Homotetramer.

The protein localises to the cytoplasm. It catalyses the reaction thymidine + ATP = dTMP + ADP + H(+). This chain is Thymidine kinase, found in Cutibacterium acnes (strain DSM 16379 / KPA171202) (Propionibacterium acnes).